The chain runs to 159 residues: 6,7-dimethyl-8-ribityllumazine synthase (159 aa).

5-amino-6-(D-ribitylamino)uracil is bound by residues phenylalanine 22, 57 to 59, and 81 to 83; these read TYE and TII. Position 86–87 (86–87) interacts with (2S)-2-hydroxy-3-oxobutyl phosphate; the sequence is ST. The active-site Proton donor is histidine 89. Methionine 114 provides a ligand contact to 5-amino-6-(D-ribitylamino)uracil. Residue arginine 128 coordinates (2S)-2-hydroxy-3-oxobutyl phosphate.

Belongs to the DMRL synthase family. In terms of assembly, forms an icosahedral capsid composed of 60 subunits, arranged as a dodecamer of pentamers.

It catalyses the reaction (2S)-2-hydroxy-3-oxobutyl phosphate + 5-amino-6-(D-ribitylamino)uracil = 6,7-dimethyl-8-(1-D-ribityl)lumazine + phosphate + 2 H2O + H(+). The protein operates within cofactor biosynthesis; riboflavin biosynthesis; riboflavin from 2-hydroxy-3-oxobutyl phosphate and 5-amino-6-(D-ribitylamino)uracil: step 1/2. Catalyzes the formation of 6,7-dimethyl-8-ribityllumazine by condensation of 5-amino-6-(D-ribitylamino)uracil with 3,4-dihydroxy-2-butanone 4-phosphate. This is the penultimate step in the biosynthesis of riboflavin. In Buchnera aphidicola subsp. Schizaphis graminum (strain Sg), this protein is 6,7-dimethyl-8-ribityllumazine synthase.